The following is a 1412-amino-acid chain: Probable phosphatidylinositol 4-kinase STT4 homolog (1412 aa).

Residues 878–1055 (SMETNGFYRF…GTFVRCIEEI (178 aa)) form the PIK helical domain. The interval 1056 to 1163 (MKEMPDGSRD…ISIKQLIFKS (108 aa)) is pleckstrin homology (PH) domain conferring phosphoinositide binding specificity. Positions 1127-1396 (NGSARALQSH…LIAESSQKFR (270 aa)) constitute a PI3K/PI4K catalytic domain. Positions 1133-1139 (LQSHSKV) are G-loop. The interval 1266–1274 (NIKDRHNGN) is catalytic loop. An activation loop region spans residues 1285–1308 (HIDFGYMLEMSPGNLNIEAPLKLT).

The protein belongs to the PI3/PI4-kinase family. Type III PI4K subfamily.

It localises to the cytoplasm. It carries out the reaction a 1,2-diacyl-sn-glycero-3-phospho-(1D-myo-inositol) + ATP = a 1,2-diacyl-sn-glycero-3-phospho-(1D-myo-inositol 4-phosphate) + ADP + H(+). Functionally, acts on phosphatidylinositol (PI) in the first committed step in the production of the second messenger inositol 1,4,5,-trisphosphate. This Encephalitozoon cuniculi (strain GB-M1) (Microsporidian parasite) protein is Probable phosphatidylinositol 4-kinase STT4 homolog (STT4).